Reading from the N-terminus, the 332-residue chain is Cysteine and histidine-rich domain-containing protein 1 (332 aa).

A2 is modified (N-acetylalanine). The segment at 2–77 (ALLCYNRGCG…KPPEPVKPEV (76 aa)) is interaction with PPP5C. Residues C5, C10, C24, H27, C42, and C43 each coordinate Zn(2+). CHORD domains follow at residues 5–64 (CYNR…KGRH) and 157–216 (CKNG…KGKH). T47 is subject to Phosphothreonine. S51 is subject to Phosphoserine. The Zn(2+) site is built by C59, H64, C157, C162, C176, H179, C194, C195, C211, and H216. Residues 65-316 (NSEKPPEPVK…AEPMQWASLE (252 aa)) form an interaction with HSP90AA1 and HSP90AB1 region. Residues 227–316 (VVPCRHDWHQ…AEPMQWASLE (90 aa)) enclose the CS domain.

Interacts with HSP90AA1, ROCK1 and ROCK2. Interacts with HSP90AB1 and PPP5C. As to expression, underexpressed in many breast and lung cancers.

Its function is as follows. Regulates centrosome duplication, probably by inhibiting the kinase activity of ROCK2. Proposed to act as co-chaperone for HSP90. May play a role in the regulation of NOD1 via a HSP90 chaperone complex. In vitro, has intrinsic chaperone activity. This function may be achieved by inhibiting association of ROCK2 with NPM1. Plays a role in ensuring the localization of the tyrosine kinase receptor EGFR to the plasma membrane, and thus ensures the subsequent regulation of EGFR activity and EGF-induced actin cytoskeleton remodeling. Involved in stress response. Prevents tumorigenesis. In Homo sapiens (Human), this protein is Cysteine and histidine-rich domain-containing protein 1 (CHORDC1).